The sequence spans 166 residues: Large ribosomal subunit protein uL10 (166 aa).

This sequence belongs to the universal ribosomal protein uL10 family. As to quaternary structure, part of the ribosomal stalk of the 50S ribosomal subunit. The N-terminus interacts with L11 and the large rRNA to form the base of the stalk. The C-terminus forms an elongated spine to which L12 dimers bind in a sequential fashion forming a multimeric L10(L12)X complex.

Functionally, forms part of the ribosomal stalk, playing a central role in the interaction of the ribosome with GTP-bound translation factors. This is Large ribosomal subunit protein uL10 from Bacillus cereus (strain G9842).